The following is a 129-amino-acid chain: Protein NrdI (129 aa).

It belongs to the NrdI family.

In terms of biological role, probably involved in ribonucleotide reductase function. This is Protein NrdI from Macrococcus caseolyticus (strain JCSC5402) (Macrococcoides caseolyticum).